The chain runs to 688 residues: Methionine--tRNA ligase (688 aa).

The 'HIGH' region motif lies at 13 to 23 (PYANGPIHIGH). Zn(2+) is bound by residues Cys-144, Cys-147, Cys-157, and Cys-160. The short motif at 334-338 (KMSKS) is the 'KMSKS' region element. Lys-337 contributes to the ATP binding site. The tRNA-binding domain maps to 582-688 (DFAKIDLRVA…AGAVPGMRVR (107 aa)).

The protein belongs to the class-I aminoacyl-tRNA synthetase family. MetG type 1 subfamily. As to quaternary structure, homodimer. Requires Zn(2+) as cofactor.

The protein localises to the cytoplasm. It catalyses the reaction tRNA(Met) + L-methionine + ATP = L-methionyl-tRNA(Met) + AMP + diphosphate. In terms of biological role, is required not only for elongation of protein synthesis but also for the initiation of all mRNA translation through initiator tRNA(fMet) aminoacylation. This is Methionine--tRNA ligase from Ralstonia nicotianae (strain ATCC BAA-1114 / GMI1000) (Ralstonia solanacearum).